The following is a 112-amino-acid chain: uncharacterized protein (112 aa).

A helical membrane pass occupies residues 82-104 (IFFGFSIIASYFLKFHLLYVILL).

Its subcellular location is the membrane. This is an uncharacterized protein from Pasteurella multocida (strain Pm70).